The following is a 98-amino-acid chain: Co-chaperonin GroES (98 aa).

Belongs to the GroES chaperonin family. As to quaternary structure, heptamer of 7 subunits arranged in a ring. Interacts with the chaperonin GroEL.

It localises to the cytoplasm. In terms of biological role, together with the chaperonin GroEL, plays an essential role in assisting protein folding. The GroEL-GroES system forms a nano-cage that allows encapsulation of the non-native substrate proteins and provides a physical environment optimized to promote and accelerate protein folding. GroES binds to the apical surface of the GroEL ring, thereby capping the opening of the GroEL channel. The protein is Co-chaperonin GroES of Agrobacterium fabrum (strain C58 / ATCC 33970) (Agrobacterium tumefaciens (strain C58)).